Here is a 371-residue protein sequence, read N- to C-terminus: Chorismate synthase (371 aa).

Residues Arg48 and Arg54 each contribute to the NADP(+) site. FMN contacts are provided by residues 125–127 (RSS), 238–239 (NA), Gly278, 293–297 (KPTSS), and Arg319.

Belongs to the chorismate synthase family. In terms of assembly, homotetramer. Requires FMNH2 as cofactor.

The enzyme catalyses 5-O-(1-carboxyvinyl)-3-phosphoshikimate = chorismate + phosphate. It participates in metabolic intermediate biosynthesis; chorismate biosynthesis; chorismate from D-erythrose 4-phosphate and phosphoenolpyruvate: step 7/7. Catalyzes the anti-1,4-elimination of the C-3 phosphate and the C-6 proR hydrogen from 5-enolpyruvylshikimate-3-phosphate (EPSP) to yield chorismate, which is the branch point compound that serves as the starting substrate for the three terminal pathways of aromatic amino acid biosynthesis. This reaction introduces a second double bond into the aromatic ring system. This chain is Chorismate synthase, found in Saccharophagus degradans (strain 2-40 / ATCC 43961 / DSM 17024).